Reading from the N-terminus, the 383-residue chain is Na(+)/H(+) antiporter NhaA (383 aa).

The next 11 helical transmembrane spans lie at 14–34 (AGGI…NSPL), 47–67 (FGMS…FLLI), 87–107 (IFPA…YVAF), 117–137 (GWAI…ALLG), 146–166 (VFLL…IALF), 171–191 (LSTM…MLNA), 205–225 (AILW…GVVI), 252–272 (VAFG…LEGV), 280–300 (MLPL…IFTF), 321–341 (IFAV…ISSL), and 356–376 (LGIL…LHFS).

Belongs to the NhaA Na(+)/H(+) (TC 2.A.33) antiporter family.

It localises to the cell inner membrane. It carries out the reaction Na(+)(in) + 2 H(+)(out) = Na(+)(out) + 2 H(+)(in). Na(+)/H(+) antiporter that extrudes sodium in exchange for external protons. The polypeptide is Na(+)/H(+) antiporter NhaA (Vibrio alginolyticus).